Here is a 279-residue protein sequence, read N- to C-terminus: 4-hydroxy-3-methylbut-2-enyl diphosphate reductase (279 aa).

Residue cysteine 12 coordinates [4Fe-4S] cluster. (2E)-4-hydroxy-3-methylbut-2-enyl diphosphate-binding residues include histidine 41 and histidine 74. Residues histidine 41 and histidine 74 each coordinate dimethylallyl diphosphate. The isopentenyl diphosphate site is built by histidine 41 and histidine 74. [4Fe-4S] cluster is bound at residue cysteine 96. Histidine 124 is a binding site for (2E)-4-hydroxy-3-methylbut-2-enyl diphosphate. Dimethylallyl diphosphate is bound at residue histidine 124. Residue histidine 124 participates in isopentenyl diphosphate binding. Glutamate 126 serves as the catalytic Proton donor. Threonine 164 lines the (2E)-4-hydroxy-3-methylbut-2-enyl diphosphate pocket. [4Fe-4S] cluster is bound at residue cysteine 192. 4 residues coordinate (2E)-4-hydroxy-3-methylbut-2-enyl diphosphate: serine 220, serine 221, asparagine 222, and serine 263. Dimethylallyl diphosphate is bound by residues serine 220, serine 221, asparagine 222, and serine 263. The isopentenyl diphosphate site is built by serine 220, serine 221, asparagine 222, and serine 263.

This sequence belongs to the IspH family. [4Fe-4S] cluster is required as a cofactor.

The catalysed reaction is isopentenyl diphosphate + 2 oxidized [2Fe-2S]-[ferredoxin] + H2O = (2E)-4-hydroxy-3-methylbut-2-enyl diphosphate + 2 reduced [2Fe-2S]-[ferredoxin] + 2 H(+). It carries out the reaction dimethylallyl diphosphate + 2 oxidized [2Fe-2S]-[ferredoxin] + H2O = (2E)-4-hydroxy-3-methylbut-2-enyl diphosphate + 2 reduced [2Fe-2S]-[ferredoxin] + 2 H(+). The protein operates within isoprenoid biosynthesis; dimethylallyl diphosphate biosynthesis; dimethylallyl diphosphate from (2E)-4-hydroxy-3-methylbutenyl diphosphate: step 1/1. Its pathway is isoprenoid biosynthesis; isopentenyl diphosphate biosynthesis via DXP pathway; isopentenyl diphosphate from 1-deoxy-D-xylulose 5-phosphate: step 6/6. In terms of biological role, catalyzes the conversion of 1-hydroxy-2-methyl-2-(E)-butenyl 4-diphosphate (HMBPP) into a mixture of isopentenyl diphosphate (IPP) and dimethylallyl diphosphate (DMAPP). Acts in the terminal step of the DOXP/MEP pathway for isoprenoid precursor biosynthesis. This is 4-hydroxy-3-methylbut-2-enyl diphosphate reductase from Clostridioides difficile (strain 630) (Peptoclostridium difficile).